Reading from the N-terminus, the 503-residue chain is Glutamate/gamma-aminobutyrate antiporter (503 aa).

33-43 (LHLVFFLLLGG) contributes to the L-glutamate binding site. A run of 7 helical transmembrane segments spans residues 35 to 55 (LVFF…LCAA), 153 to 173 (FVVG…AYFI), 194 to 214 (VSTL…EASA), 232 to 252 (ILLV…VAAV), 366 to 386 (LTVV…FVLI), 407 to 427 (IIAG…FVPP), and 440 to 460 (MILL…YELH).

It belongs to the amino acid-polyamine-organocation (APC) superfamily. Glutamate:GABA antiporter (GGA) (TC 2.A.3.7) family.

Its subcellular location is the cell membrane. It catalyses the reaction 4-aminobutanoate(in) + L-glutamate(out) = 4-aminobutanoate(out) + L-glutamate(in). In terms of biological role, involved in glutaminase-dependent acid resistance. Exchanges extracellular glutamate (Glu) for intracellular gamma-aminobutyric acid (GABA) under acidic conditions. This is Glutamate/gamma-aminobutyrate antiporter (gadC) from Lactococcus lactis subsp. lactis (strain IL1403) (Streptococcus lactis).